A 619-amino-acid chain; its full sequence is Dihydroxy-acid dehydratase (619 aa).

Residue Asp-81 participates in Mg(2+) binding. Residue Cys-122 coordinates [2Fe-2S] cluster. 2 residues coordinate Mg(2+): Asp-123 and Lys-124. Lys-124 is modified (N6-carboxylysine). [2Fe-2S] cluster is bound at residue Cys-198. Position 494 (Glu-494) interacts with Mg(2+). Ser-520 acts as the Proton acceptor in catalysis.

It belongs to the IlvD/Edd family. In terms of assembly, homodimer. It depends on [2Fe-2S] cluster as a cofactor. Requires Mg(2+) as cofactor.

The enzyme catalyses (2R)-2,3-dihydroxy-3-methylbutanoate = 3-methyl-2-oxobutanoate + H2O. It catalyses the reaction (2R,3R)-2,3-dihydroxy-3-methylpentanoate = (S)-3-methyl-2-oxopentanoate + H2O. It participates in amino-acid biosynthesis; L-isoleucine biosynthesis; L-isoleucine from 2-oxobutanoate: step 3/4. The protein operates within amino-acid biosynthesis; L-valine biosynthesis; L-valine from pyruvate: step 3/4. Functionally, functions in the biosynthesis of branched-chain amino acids. Catalyzes the dehydration of (2R,3R)-2,3-dihydroxy-3-methylpentanoate (2,3-dihydroxy-3-methylvalerate) into 2-oxo-3-methylpentanoate (2-oxo-3-methylvalerate) and of (2R)-2,3-dihydroxy-3-methylbutanoate (2,3-dihydroxyisovalerate) into 2-oxo-3-methylbutanoate (2-oxoisovalerate), the penultimate precursor to L-isoleucine and L-valine, respectively. This chain is Dihydroxy-acid dehydratase, found in Neisseria meningitidis serogroup C / serotype 2a (strain ATCC 700532 / DSM 15464 / FAM18).